The primary structure comprises 332 residues: Glyceraldehyde-3-phosphate dehydrogenase 2 (332 aa).

Positions 11, 12, and 33 each coordinate NAD(+). Residues lysine 46 and lysine 63 each participate in a glycyl lysine isopeptide (Lys-Gly) (interchain with G-Cter in ubiquitin) cross-link. Threonine 120 is an NAD(+) binding site. D-glyceraldehyde 3-phosphate-binding positions include 149-151 (SCT), threonine 180, 209-210 (TG), and arginine 232. Cysteine 150 functions as the Nucleophile in the catalytic mechanism. Serine 302 is modified (phosphoserine). Residues asparagine 314 and tyrosine 318 each contribute to the NAD(+) site.

This sequence belongs to the glyceraldehyde-3-phosphate dehydrogenase family. As to quaternary structure, homotetramer.

Its subcellular location is the cytoplasm. It catalyses the reaction D-glyceraldehyde 3-phosphate + phosphate + NAD(+) = (2R)-3-phospho-glyceroyl phosphate + NADH + H(+). The enzyme catalyses NADH + H2O = (6R)-NADHX. It carries out the reaction NADH + H2O = (6S)-NADHX. The catalysed reaction is NADPH + H2O = (6R)-NADPHX. It catalyses the reaction NADPH + H2O = (6S)-NADPHX. It participates in carbohydrate degradation; glycolysis; pyruvate from D-glyceraldehyde 3-phosphate: step 1/5. In terms of biological role, glyceraldehyde-3-phosphate dehydrogenase (GAPDH) involved in glycolysis and gluconeogenesis. Catalyzes the reaction of glyceraldehyde-3-phosphate to 1,3 bis-phosphoglycerate. The contribution of the TDH1, TDH2, and TDH3 to the total glyceraldehyde-3-phosphate dehydrogenase activity is 10-15, 25-30, and 50-60%, respectively. Functionally, as a side activity, catalyzes the hydration of the nicotinamide ring of NADH or NADPH at the C6 position to give the corresponding hydrates, NADHX and NADPHX, which exist as R and S epimers, that cannot act as electron donors or acceptors and inhibit several dehydrogenases, making them toxic. The protein is Glyceraldehyde-3-phosphate dehydrogenase 2 of Saccharomyces cerevisiae (strain ATCC 204508 / S288c) (Baker's yeast).